Reading from the N-terminus, the 670-residue chain is DNA ligase (670 aa).

Residues 34 to 38, 83 to 84, and Glu113 contribute to the NAD(+) site; these read DFEFD and SL. Lys115 functions as the N6-AMP-lysine intermediate in the catalytic mechanism. NAD(+)-binding residues include Arg136, Glu173, Lys288, and Lys312. Zn(2+)-binding residues include Cys406, Cys409, Cys424, and Cys430. The BRCT domain occupies 591–670; the sequence is PESDKFAGKS…EAEFISLLNS (80 aa).

Belongs to the NAD-dependent DNA ligase family. LigA subfamily. It depends on Mg(2+) as a cofactor. Mn(2+) serves as cofactor.

The enzyme catalyses NAD(+) + (deoxyribonucleotide)n-3'-hydroxyl + 5'-phospho-(deoxyribonucleotide)m = (deoxyribonucleotide)n+m + AMP + beta-nicotinamide D-nucleotide.. DNA ligase that catalyzes the formation of phosphodiester linkages between 5'-phosphoryl and 3'-hydroxyl groups in double-stranded DNA using NAD as a coenzyme and as the energy source for the reaction. It is essential for DNA replication and repair of damaged DNA. This Cytophaga hutchinsonii (strain ATCC 33406 / DSM 1761 / CIP 103989 / NBRC 15051 / NCIMB 9469 / D465) protein is DNA ligase.